Reading from the N-terminus, the 511-residue chain is 2-isopropylmalate synthase (511 aa).

The Pyruvate carboxyltransferase domain maps to 5 to 267 (IQIFDTTLRD…QTQINLEETK (263 aa)). Mn(2+)-binding residues include D14, H202, H204, and N238. A regulatory domain region spans residues 391–511 (KVETLQLQFV…NTKVEEGIHS (121 aa)).

This sequence belongs to the alpha-IPM synthase/homocitrate synthase family. LeuA type 1 subfamily. As to quaternary structure, homodimer. The cofactor is Mn(2+).

Its subcellular location is the cytoplasm. The catalysed reaction is 3-methyl-2-oxobutanoate + acetyl-CoA + H2O = (2S)-2-isopropylmalate + CoA + H(+). It functions in the pathway amino-acid biosynthesis; L-leucine biosynthesis; L-leucine from 3-methyl-2-oxobutanoate: step 1/4. In terms of biological role, catalyzes the condensation of the acetyl group of acetyl-CoA with 3-methyl-2-oxobutanoate (2-ketoisovalerate) to form 3-carboxy-3-hydroxy-4-methylpentanoate (2-isopropylmalate). The chain is 2-isopropylmalate synthase from Staphylococcus saprophyticus subsp. saprophyticus (strain ATCC 15305 / DSM 20229 / NCIMB 8711 / NCTC 7292 / S-41).